A 450-amino-acid polypeptide reads, in one-letter code: Ceramide glucosyltransferase (450 aa).

Over 1–8 (MSDSGTLS) the chain is Lumenal. A helical membrane pass occupies residues 9-29 (LIGGIVFLVLWVVVWSICLLG). The Cytoplasmic segment spans residues 30-337 (WRTARIRYAH…IRVRKKMTLA (308 aa)). Residue D96 is a short sequence motif, D1. A short sequence motif (D2) is located at residue D148. Residue D286 is a short sequence motif, D3. The active-site Proton acceptor is D286. Positions 323–327 (RRVRW) match the (Q/R)XXRW motif. The helical transmembrane segment at 338–358 (ATLLEPLTESIISGLYGAWAI) threads the bilayer. Residues 359 to 361 (SRL) lie on the Lumenal side of the membrane. Residues 362 to 382 (LGGNILPLFLLHMAAWISVDI) traverse the membrane as a helical segment. Residues 383 to 401 (STKRALETNIKGIGPPESK) lie on the Cytoplasmic side of the membrane. The chain crosses the membrane as a helical span at residues 402-422 (VTFLMAWAARECLALPIWMLA). The Lumenal portion of the chain corresponds to 423 to 450 (MTSSEVVWRGQKYKIIASGEAIRLGDRN).

This sequence belongs to the glycosyltransferase 2 family.

It is found in the golgi apparatus membrane. It carries out the reaction an N-acylsphing-4-enine + UDP-alpha-D-glucose = a beta-D-glucosyl-(1&lt;-&gt;1')-N-acylsphing-4-enine + UDP + H(+). The protein operates within lipid metabolism; sphingolipid metabolism. Its function is as follows. Catalyzes the final step in the biosynthesis of the membrane lipid glucosylceramide (GluCer), the transfer of glucose to ceramide. Glucosylceramides play important roles in growth, differentiation and pathogenicity. Essential factor in determining the success of fungal infection by regulating survival of yeast cells during the initial colonization of the host lung. The protein is Ceramide glucosyltransferase of Cryptococcus neoformans var. grubii serotype A (strain H99 / ATCC 208821 / CBS 10515 / FGSC 9487) (Filobasidiella neoformans var. grubii).